The chain runs to 949 residues: Coiled-coil domain-containing protein 80 (949 aa).

Residues 1–22 (MMWKMGPHFTTLLAMWLVCGSA) form the signal peptide. Disordered regions lie at residues 24–79 (HSPA…RRKS), 112–132 (SSAR…MLRF), and 289–610 (HVVQ…PKKS). The segment covering 112-123 (SSAREMVRDEGS) has biased composition (basic and acidic residues). The segment covering 295–307 (NEGGGGAGGTGLG) has biased composition (gly residues). Basic and acidic residues predominate over residues 308–328 (GDKRKEDPRRTQVHPTREAPR). The segment covering 345–380 (RATTLPPAPVTTATRATSRVVTIAARPTTTTAYPAT) has biased composition (low complexity). Positions 419–429 (PRKEQQREKPQ) are enriched in basic and acidic residues. A compositionally biased stretch (polar residues) spans 436 to 445 (KATNYGSFTA). The segment covering 463–477 (RFRDNRTDKREHGHQ) has biased composition (basic and acidic residues). Asparagine 467 carries an N-linked (GlcNAc...) asparagine glycan. The span at 487–498 (KPVKGKLPKKKD) shows a compositional bias: basic residues. 3 stretches are compositionally biased toward basic and acidic residues: residues 499–510 (RILSNEYEDKYD), 534–548 (KESK…PEKE), and 556–581 (AKQD…EKDK). Residues lysine 544 and lysine 547 each participate in a glycyl lysine isopeptide (Lys-Gly) (interchain with G-Cter in SUMO2) cross-link. Residues 554 to 587 (KSAKQDKLLKSEKQAKKAEKKTKQEKDKNKKKKA) are a coiled coil.

Belongs to the CCDC80 family. As to quaternary structure, binds to various extracellular matrix proteins. In terms of processing, phosphorylated. In terms of tissue distribution, expressed in brain, stomach, colon, rectum, liver, lung, kidney, adipocytes and testis.

Its subcellular location is the secreted. The protein resides in the extracellular space. The protein localises to the extracellular matrix. Functionally, promotes cell adhesion and matrix assembly. This is Coiled-coil domain-containing protein 80 (Ccdc80) from Mus musculus (Mouse).